The sequence spans 386 residues: MSMLLYYFASAVKSIQFHVDDDIIDKLNYYYTTAIITVFAILVSAKQYVGFPIQCWVPATFTEPMEQYTENYCWVQNTYFLPLHDYIPHNYAERENRQIGYYQWVPFVLALEALLFYVPTIVWRLLSWQSGIHVQSLVQMACDSRLLDLESRNRALQTIATNVEEALHVKHQVMSGNRLKLLNLIICTRSSGAAVTFLYISVKILYTVNIVGQIFLLNTFLGNRSKWYGLQVLNDLMNGREWEESGHFPRVTLCDFEVKVLGNVHRHTVQCVLMINMFNEKIFLFLWFWYFLLAGATLCSLFYWIYISVVPSRQLNFVGKYLTGIEGYKMVDSQSLRRFVFHFLRQDGVFLLRMVATHAGELPCYELAKTLWNNYCDNKEGKMHDV.

The next 4 membrane-spanning stretches (helical) occupy residues 33–53, 103–123, 197–217, and 282–302; these read TAII…GFPI, QWVP…TIVW, FLYI…IFLL, and IFLF…CSLF.

The protein belongs to the pannexin family. As to quaternary structure, heterooligomer of unc-7 and unc-9. Interacts with F-actin. As to expression, expressed in PLM neurons (at protein level). Expressed in the nerve ring.

It is found in the cell membrane. The protein resides in the cell junction. Its subcellular location is the gap junction. Functionally, structural component of gap junctions. Plays a role in maintaining gap junction activity to promote locomotion. The chain is Innexin unc-9 from Caenorhabditis elegans.